The chain runs to 596 residues: Trehalase (596 aa).

Positions 1 to 23 are cleaved as a signal peptide; it reads MFKLPTISLLLVSWSCLVALSQA. Substrate is bound by residues Arg-193, 200 to 201, Asn-237, and 246 to 248; these read WD and RSQ. Asn-288 and Asn-293 each carry an N-linked (GlcNAc...) asparagine glycan. Residues 303–323 are disordered; that stretch reads SSGPRPESYREDVETGEEFPT. Substrate is bound by residues 307-309 and Gly-341; that span reads RPE. The Proton donor/acceptor role is filled by Asp-343. 3 N-linked (GlcNAc...) asparagine glycosylation sites follow: Asn-359, Asn-451, and Asn-516. Glu-541 (proton donor/acceptor) is an active-site residue. Glu-556 contacts substrate.

This sequence belongs to the glycosyl hydrolase 37 family. In the adult brain predominantly expressed in glial cells (at protein level).

The enzyme catalyses alpha,alpha-trehalose + H2O = alpha-D-glucose + beta-D-glucose. Functionally, enzyme that cleaves trehalose to produce 2 glucose molecules that can be used by the glycolytic pathway. Glycolysis is essential in glial cells but not in neurons; neurons rely on the citric acid cycle for their energy needs, and on lactate and alanine secreted into the hemolymph by glial cells to fuel it. The sequence is that of Trehalase from Drosophila melanogaster (Fruit fly).